The sequence spans 455 residues: MDTPRVLLSAVFLISFLWDLPGFQQASISSSSSSAELGSTKGMRSRKEGKMQRAPRDSDAGREGQEPQPRPQDEPRAQQPRAQEPPGRGPRVVPHEYMLSIYRTYSIAEKLGINASFFQSSKSANTITSFVDRGLDDLSHTPLRRQKYLFDVSMLSDKEELVGAELRLFRQAPSAPWGPPAGPLHVQLFPCLSPLLLDARTLDPQGAPPAGWEVFDVWQGLRHQPWKQLCLELRAAWGELDAGEAEARARGPQQPPPPDLRSLGFGRRVRPPQERALLVVFTRSQRKNLFAEMREQLGSAEAAGPGAGAEGSWPPPSGAPDARPWLPSPGRRRRRTAFASRHGKRHGKKSRLRCSKKPLHVNFKELGWDDWIIAPLEYEAYHCEGVCDFPLRSHLEPTNHAIIQTLMNSMDPGSTPPSCCVPTKLTPISILYIDAGNNVVYKQYEDMVVESCGCR.

The N-terminal stretch at 1 to 22 is a signal peptide; sequence MDTPRVLLSAVFLISFLWDLPG. Residues 23–335 constitute a propeptide that is removed on maturation; that stretch reads FQQASISSSS…LPSPGRRRRR (313 aa). Residues 29–93 are disordered; it reads SSSSSSAELG…EPPGRGPRVV (65 aa). The span at 45–76 shows a compositional bias: basic and acidic residues; sequence SRKEGKMQRAPRDSDAGREGQEPQPRPQDEPR. Positions 77–91 are enriched in low complexity; that stretch reads AQQPRAQEPPGRGPR. An N-linked (GlcNAc...) asparagine glycan is attached at asparagine 114. Disordered stretches follow at residues 244–267 and 300–351; these read EAEARARGPQQPPPPDLRSLGFGR and AEAA…KKSR. Residues 330-351 show a composition bias toward basic residues; that stretch reads GRRRRRTAFASRHGKRHGKKSR. Disulfide bonds link cysteine 354-cysteine 420, cysteine 383-cysteine 452, and cysteine 387-cysteine 454.

It belongs to the TGF-beta family. In terms of assembly, homodimer; disulfide-linked.

It is found in the secreted. Its function is as follows. Growth factor that controls proliferation and cellular differentiation in the retina and bone formation. Plays a key role in regulating apoptosis during retinal development. Establishes dorsal-ventral positional information in the retina and controls the formation of the retinotectal map. Required for normal formation of bones and joints in the limbs, skull, digits and axial skeleton. Plays a key role in establishing boundaries between skeletal elements during development. Regulation of GDF6 expression seems to be a mechanism for evolving species-specific changes in skeletal structures. Seems to positively regulate differentiation of chondrogenic tissue through the growth factor receptors subunits BMPR1A, BMPR1B, BMPR2 and ACVR2A, leading to the activation of SMAD1-SMAD5-SMAD8 complex. The regulation of chondrogenic differentiation is inhibited by NOG. Also involved in the induction of adipogenesis from mesenchymal stem cells. This mechanism acts through the growth factor receptors subunits BMPR1A, BMPR2 and ACVR2A and the activation of SMAD1-SMAD5-SMAD8 complex and MAPK14/p38. This chain is Growth/differentiation factor 6 (GDF6), found in Homo sapiens (Human).